The chain runs to 156 residues: Large ribosomal subunit protein uL11 (156 aa).

Residues 1–20 (MAQSVKTMVEGGKATTGPPI) form a disordered region.

Belongs to the universal ribosomal protein uL11 family. Part of the ribosomal stalk of the 50S ribosomal subunit. Interacts with L10 and the large rRNA to form the base of the stalk. L10 forms an elongated spine to which L12 dimers bind in a sequential fashion forming a multimeric L10(L12)X complex.

Forms part of the ribosomal stalk which helps the ribosome interact with GTP-bound translation factors. This is Large ribosomal subunit protein uL11 from Thermoplasma acidophilum (strain ATCC 25905 / DSM 1728 / JCM 9062 / NBRC 15155 / AMRC-C165).